Consider the following 547-residue polypeptide: Putative cysteine ligase BshC (547 aa).

Residues 461-504 are a coiled coil; that stretch reads ASTEATRSAIMDEMEALKQKVVRAEKRQQDEVRAQLKKAHTNLR.

It belongs to the BshC family.

This Salinibacter ruber (strain DSM 13855 / M31) protein is Putative cysteine ligase BshC.